Consider the following 281-residue polypeptide: HTH-type transcriptional activator RhaR (281 aa).

One can recognise an HTH araC/xylS-type domain in the interval 178–276 (DKLLAALAAS…GMSPGQWRQR (99 aa)). DNA-binding regions (H-T-H motif) lie at residues 195 to 216 (ERFC…RQQT) and 243 to 266 (IGDI…SREI).

Binds DNA as a dimer.

It is found in the cytoplasm. In terms of biological role, activates expression of the rhaSR operon in response to L-rhamnose. The chain is HTH-type transcriptional activator RhaR from Klebsiella pneumoniae subsp. pneumoniae (strain ATCC 700721 / MGH 78578).